Reading from the N-terminus, the 223-residue chain is Ubiquitin carboxyl-terminal hydrolase isozyme L1 (223 aa).

The residue at position 1 (methionine 1) is an N-acetylmethionine. Residues glutamine 2–lysine 221 enclose the UCH catalytic domain. Residues proline 5–proline 10 form an interaction with ubiquitin region. Cysteine 90 acts as the Nucleophile in catalysis. At serine 125 the chain carries Phosphoserine. The Proton donor role is filled by histidine 161. The segment at glutamate 211–alanine 216 is interaction with ubiquitin. The S-farnesyl cysteine moiety is linked to residue cysteine 220. A propeptide spans lysine 221–alanine 223 (removed in mature form).

This sequence belongs to the peptidase C12 family. In terms of assembly, monomer. Homodimer. Interacts with COPS5 and SNCA. In terms of processing, O-glycosylated. Expressed in the placenta at all stages of pregnancy. Expression increases as pregnancy progresses.

The protein localises to the cytoplasm. Its subcellular location is the endoplasmic reticulum membrane. It localises to the nucleus. The catalysed reaction is Thiol-dependent hydrolysis of ester, thioester, amide, peptide and isopeptide bonds formed by the C-terminal Gly of ubiquitin (a 76-residue protein attached to proteins as an intracellular targeting signal).. Ubiquitin-protein hydrolase involved both in the processing of ubiquitin precursors and of ubiquitinated proteins. This enzyme is a thiol protease that recognizes and hydrolyzes a peptide bond at the C-terminal glycine of ubiquitin. Also binds to free monoubiquitin and may prevent its degradation in lysosomes. The homodimer may have ATP-independent ubiquitin ligase activity. The chain is Ubiquitin carboxyl-terminal hydrolase isozyme L1 (UCHL1) from Macaca fascicularis (Crab-eating macaque).